The primary structure comprises 280 residues: 4-hydroxy-tetrahydrodipicolinate reductase (280 aa).

Residues 14-19 (GAAGRM), D40, 106-108 (ATT), and 130-133 (APSM) each bind NAD(+). Residue H166 is the Proton donor/acceptor of the active site. A (S)-2,3,4,5-tetrahydrodipicolinate-binding site is contributed by H167. Catalysis depends on K170, which acts as the Proton donor. Residue 176–177 (GT) coordinates (S)-2,3,4,5-tetrahydrodipicolinate.

Belongs to the DapB family.

It localises to the cytoplasm. The catalysed reaction is (S)-2,3,4,5-tetrahydrodipicolinate + NAD(+) + H2O = (2S,4S)-4-hydroxy-2,3,4,5-tetrahydrodipicolinate + NADH + H(+). It catalyses the reaction (S)-2,3,4,5-tetrahydrodipicolinate + NADP(+) + H2O = (2S,4S)-4-hydroxy-2,3,4,5-tetrahydrodipicolinate + NADPH + H(+). It functions in the pathway amino-acid biosynthesis; L-lysine biosynthesis via DAP pathway; (S)-tetrahydrodipicolinate from L-aspartate: step 4/4. Its function is as follows. Catalyzes the conversion of 4-hydroxy-tetrahydrodipicolinate (HTPA) to tetrahydrodipicolinate. This is 4-hydroxy-tetrahydrodipicolinate reductase from Rhodopirellula baltica (strain DSM 10527 / NCIMB 13988 / SH1).